We begin with the raw amino-acid sequence, 409 residues long: Beta-glucanase (409 aa).

The first 31 residues, Met1–Ala31, serve as a signal peptide directing secretion. The active-site Proton donor is the Glu95. Asp156 functions as the Nucleophile in the catalytic mechanism.

The protein belongs to the glycosyl hydrolase 8 (cellulase D) family.

The catalysed reaction is Hydrolysis of (1-&gt;4)-beta-D-glucosidic linkages in beta-D-glucans containing (1-&gt;3)- and (1-&gt;4)-bonds.. This Niallia circulans (Bacillus circulans) protein is Beta-glucanase (bgc).